The chain runs to 663 residues: Alcohol oxidase 1 (663 aa).

Residue 8–38 (DILVLGGGSSGSCIAGRLANLDHSLKVGLIE) coordinates FAD. H567 functions as the Proton acceptor in the catalytic mechanism. A Microbody targeting signal motif is present at residues 661-663 (ARF).

Belongs to the GMC oxidoreductase family. In terms of assembly, homooctamer. FAD serves as cofactor.

The protein resides in the peroxisome matrix. The catalysed reaction is a primary alcohol + O2 = an aldehyde + H2O2. The protein operates within energy metabolism; methane degradation. Major isoform of alcohol oxidase, which catalyzes the oxidation of methanol to formaldehyde and hydrogen peroxide, the first step in the methanol utilization pathway of methylotrophic yeasts. This is Alcohol oxidase 1 (AOX1) from Komagataella phaffii (strain ATCC 76273 / CBS 7435 / CECT 11047 / NRRL Y-11430 / Wegner 21-1) (Yeast).